Reading from the N-terminus, the 150-residue chain is Putative biopolymer transport protein ExbB-like 2 (150 aa).

3 helical membrane passes run 5-25 (VDYG…AIAI), 63-83 (APYI…MDLG), and 97-117 (LALA…AIVI).

This sequence belongs to the ExbB/TolQ family.

The protein localises to the cell inner membrane. The chain is Putative biopolymer transport protein ExbB-like 2 from Helicobacter pylori (strain ATCC 700392 / 26695) (Campylobacter pylori).